Consider the following 115-residue polypeptide: Large ribosomal subunit protein bL19 (115 aa).

The protein belongs to the bacterial ribosomal protein bL19 family.

Functionally, this protein is located at the 30S-50S ribosomal subunit interface and may play a role in the structure and function of the aminoacyl-tRNA binding site. The sequence is that of Large ribosomal subunit protein bL19 from Desulfovibrio desulfuricans (strain ATCC 27774 / DSM 6949 / MB).